The following is a 341-amino-acid chain: NADH-ubiquinone oxidoreductase chain 2 (341 aa).

8 helical membrane-spanning segments follow: residues 8 to 28, 61 to 81, 95 to 117, 145 to 165, 195 to 215, 238 to 258, 266 to 286, and 320 to 340; these read IFFI…SWLG, FLTQ…MMMF, LLIL…FPGV, LNIN…ALGG, LLWL…ILMF, FFMF…GFLP, LVEM…LITL, and ILTM…IYLI.

It belongs to the complex I subunit 2 family.

Its subcellular location is the mitochondrion inner membrane. The catalysed reaction is a ubiquinone + NADH + 5 H(+)(in) = a ubiquinol + NAD(+) + 4 H(+)(out). In terms of biological role, core subunit of the mitochondrial membrane respiratory chain NADH dehydrogenase (Complex I) that is believed to belong to the minimal assembly required for catalysis. Complex I functions in the transfer of electrons from NADH to the respiratory chain. The immediate electron acceptor for the enzyme is believed to be ubiquinone. The protein is NADH-ubiquinone oxidoreductase chain 2 of Aedes aegypti (Yellowfever mosquito).